A 490-amino-acid polypeptide reads, in one-letter code: Metalloreductase STEAP2 (490 aa).

NADP(+) contacts are provided by residues 38–41 (SGDF), 60–61 (SR), 93–100 (IHREHYTS), Asn-118, and Ala-151. The FAD site is built by Trp-152 and Asp-160. The helical transmembrane segment at 208–228 (LFTLWRGPVVVAISLATFFFL) threads the bilayer. Position 229 (Tyr-229) interacts with Fe(3+). The chain crosses the membrane as a helical span at residues 259–279 (LPIVAITLLSLVYLAGLLAAA). In terms of domain architecture, Ferric oxidoreductase spans 259–407 (LPIVAITLLS…LGYVALLIST (149 aa)). Residues Gln-281 and Arg-302 each contribute to the FAD site. 4 consecutive transmembrane segments (helical) span residues 305 to 325 (LGLL…CLPM), 359 to 379 (MYIS…VTSI), 393 to 413 (FIQS…VLIY), and 432 to 452 (FVLA…LFLP). His-316 contacts heme b. Residue Tyr-319 coordinates Fe(3+). FAD contacts are provided by Ser-378 and Gln-395. A heme b-binding site is contributed by His-409. At Ser-483 the chain carries Phosphoserine.

Belongs to the STEAP family. The cofactor is FAD. Heme b serves as cofactor. In terms of tissue distribution, expressed at high levels in prostate and at significantly lower levels in heart, brain, kidney, pancreas, and ovary.

It is found in the endosome membrane. Its subcellular location is the cell membrane. The catalysed reaction is 2 Fe(2+) + NADP(+) + H(+) = 2 Fe(3+) + NADPH. The enzyme catalyses 2 Cu(+) + NADP(+) + H(+) = 2 Cu(2+) + NADPH. Its function is as follows. Integral membrane protein that functions as a NADPH-dependent ferric-chelate reductase, using NADPH from one side of the membrane to reduce a Fe(3+) chelate that is bound on the other side of the membrane. Mediates sequential transmembrane electron transfer from NADPH to FAD and onto heme, and finally to the Fe(3+) chelate. Can also reduce Cu(2+) to Cu(1+). The sequence is that of Metalloreductase STEAP2 (STEAP2) from Homo sapiens (Human).